A 155-amino-acid polypeptide reads, in one-letter code: Small ribosomal subunit protein uS7c (155 aa).

This sequence belongs to the universal ribosomal protein uS7 family. Part of the 30S ribosomal subunit.

Its subcellular location is the plastid. It is found in the chloroplast. Functionally, one of the primary rRNA binding proteins, it binds directly to 16S rRNA where it nucleates assembly of the head domain of the 30S subunit. The chain is Small ribosomal subunit protein uS7c (rps7) from Cabomba caroliniana (Carolina fanwort).